A 158-amino-acid polypeptide reads, in one-letter code: Kalata-B3/B6 (158 aa).

The signal sequence occupies residues 1–22 (MAKFTKSLVLCLLLAAFVGAFG). The propeptide occupies 23-66 (AELSEADKANVVNEIAANIQREILKGVKSSETTLTMFLKEMQLK). The segment at residues 67 to 96 (GLPTCGETCFGGTCNTPGCSCSSWPICTRN) is a cross-link (cyclopeptide (Gly-Asn)). 3 cysteine pairs are disulfide-bonded: C71–C85, C75–C87, and C80–C93. A propeptide spanning residues 97 to 121 (GLPKRAGVKSSETTLTMFLKEMQLK) is cleaved from the precursor. Residues 122 to 151 (GLPTCGETCFGGTCNTPGCTCDPWPICTRD) constitute a cross-link (cyclopeptide (Gly-Asp)). Intrachain disulfides connect C126–C140, C130–C142, and C135–C148. Residues 152–158 (GLPSAAA) constitute a propeptide that is removed on maturation.

Belongs to the cyclotide family. Moebius subfamily. In terms of processing, kalata-B3 and kalata-B6 are cyclic peptides.

Functionally, probably participates in a plant defense mechanism. Has hemolytic activity. The polypeptide is Kalata-B3/B6 (OAK2) (Oldenlandia affinis).